Reading from the N-terminus, the 267-residue chain is Chlorophyll a-b binding protein 3B, chloroplastic (267 aa).

Residues 1–34 constitute a chloroplast transit peptide; the sequence is MAASTMALSSSTFAGKAVKLSPSSSEISGNGRIT. The segment at 19 to 52 is disordered; sequence KLSPSSSEISGNGRITMRKTAAKPKPASSGSPWX. The helical transmembrane segment at 153–173 threads the bilayer; sequence LVHAQSILAIWACQVVLMGAV. Chlorophyll b contacts are provided by V154, S158, Q166, E174, R177, and L183. Residues K214, E215, N218, R220, Q232, H247, and A256 each coordinate chlorophyll a. A helical transmembrane segment spans residues 221-241; that stretch reads LAMFSMFGFFVQAIVTGKGPL. A chlorophyll b-binding site is contributed by F263.

It belongs to the light-harvesting chlorophyll a/b-binding (LHC) protein family. The LHC complex consists of chlorophyll a-b binding proteins. The cofactor is Binds at least 14 chlorophylls (8 Chl-a and 6 Chl-b) and carotenoids such as lutein and neoxanthin.. Post-translationally, photoregulated by reversible phosphorylation of its threonine residues.

Its subcellular location is the plastid. The protein resides in the chloroplast thylakoid membrane. Functionally, the light-harvesting complex (LHC) functions as a light receptor, it captures and delivers excitation energy to photosystems with which it is closely associated. This Solanum lycopersicum (Tomato) protein is Chlorophyll a-b binding protein 3B, chloroplastic (CAB3B).